The sequence spans 209 residues: 3-hexulose-6-phosphate synthase (209 aa).

The protein belongs to the HPS/KGPDC family. HPS subfamily. Homodimer.

It catalyses the reaction D-ribulose 5-phosphate + formaldehyde = D-arabino-hex-3-ulose 6-phosphate. It functions in the pathway one-carbon metabolism; formaldehyde assimilation via RuMP pathway; D-fructose 6-phosphate from D-ribulose 5-phosphate and formaldehyde: step 1/2. Its function is as follows. Catalyzes the condensation of ribulose 5-phosphate with formaldehyde to form 3-hexulose 6-phosphate. This chain is 3-hexulose-6-phosphate synthase (rmpA), found in Methylomonas aminofaciens.